Here is a 335-residue protein sequence, read N- to C-terminus: Glyceraldehyde-3-phosphate dehydrogenase (335 aa).

Residues 13–14 (TI) and glycine 111 contribute to the NAD(+) site. Position 140–142 (140–142 (SCN)) interacts with D-glyceraldehyde 3-phosphate. Cysteine 141 serves as the catalytic Nucleophile. Arginine 169 provides a ligand contact to NAD(+). 195 to 196 (HG) serves as a coordination point for D-glyceraldehyde 3-phosphate. Glutamine 300 is a binding site for NAD(+).

The protein belongs to the glyceraldehyde-3-phosphate dehydrogenase family. Homotetramer.

Its subcellular location is the cytoplasm. The catalysed reaction is D-glyceraldehyde 3-phosphate + phosphate + NADP(+) = (2R)-3-phospho-glyceroyl phosphate + NADPH + H(+). The enzyme catalyses D-glyceraldehyde 3-phosphate + phosphate + NAD(+) = (2R)-3-phospho-glyceroyl phosphate + NADH + H(+). It participates in carbohydrate degradation; glycolysis; pyruvate from D-glyceraldehyde 3-phosphate: step 1/5. The chain is Glyceraldehyde-3-phosphate dehydrogenase from Methanococcoides burtonii (strain DSM 6242 / NBRC 107633 / OCM 468 / ACE-M).